The sequence spans 387 residues: Small ribosomal subunit protein mS31 (387 aa).

The transit peptide at 1–56 directs the protein to the mitochondrion; that stretch reads MLHRIPAFIRPRPFSGLPLSCGNREVSVAASVLPAAGSGAVRTENTIQRHFCTSRS. Disordered stretches follow at residues 59–83 and 203–228; these read SKKDDQSVPANETSQKAAESQGEGK and KSPSMRVSSRPQHQIQFDEEVDSSLS. Composition is skewed to polar residues over residues 66-76 and 207-217; these read VPANETSQKAA and MRVSSRPQHQI.

This sequence belongs to the mitochondrion-specific ribosomal protein mS31 family. Component of the mitochondrial ribosome small subunit (28S) which comprises a 12S rRNA and about 30 distinct proteins.

Its subcellular location is the mitochondrion. The chain is Small ribosomal subunit protein mS31 (Mrps31) from Rattus norvegicus (Rat).